A 410-amino-acid chain; its full sequence is D-amino acid dehydrogenase (410 aa).

9–14 serves as a coordination point for FAD; that stretch reads GGGIVG.

The protein belongs to the DadA oxidoreductase family. It depends on FAD as a cofactor.

It is found in the cell inner membrane. It catalyses the reaction a D-alpha-amino acid + a quinone + H2O = a 2-oxocarboxylate + a quinol + NH4(+). Activity is markedly inhibited by benzoate, and moderately by SH reagents such as p-hydroxymercuribenzoate, iodoacetamide, and iodoacetate. Its function is as follows. Catalyzes the oxidative deamination of D-amino acids. Has broad substrate specificity; is mostly active on D-proline, and to a lesser extent, on several other D-amino acids such as D-alanine, D-phenylalanine and D-serine. Mediates electron transport from D-proline to coenzyme Q1 in vitro, and is involved in the electron transport chain from D-proline to the c-type cytochrome in vivo. In Helicobacter pylori (Campylobacter pylori), this protein is D-amino acid dehydrogenase.